Consider the following 583-residue polypeptide: Interactor of constitutive active ROPs 2, chloroplastic (583 aa).

A chloroplast-targeting transit peptide spans 1–55; sequence MQTPKPRPGSLEVPQKKSPASTPKTARKLKTSESDPVSSPNTKIRTPKTQSPKVV. 2 disordered regions span residues 1 to 80 and 101 to 125; these read MQTP…PELA and EALK…NASE. The span at 34–52 shows a compositional bias: polar residues; that stretch reads SDPVSSPNTKIRTPKTQSP. 2 coiled-coil regions span residues 74–207 and 238–516; these read GKTP…DAKE and MKMS…AAAT. A compositionally biased stretch (basic and acidic residues) spans 102–115; that stretch reads ALKKEAQDQAEETK. A disordered region spans residues 518-583; sequence LSGGNNNNNS…IGVLLKKSQK (66 aa). A compositionally biased stretch (low complexity) spans 519 to 529; it reads SGGNNNNNSNG. At S540 the chain carries Phosphoserine.

The protein belongs to the ICR family. As to quaternary structure, interacts with ARAC8, ARAC11 and KIN13A in vitro, but not with ICR1 or SEC3A.

It localises to the plastid. It is found in the chloroplast. In terms of biological role, acts as a scaffold, mediating interaction of ROPs with different proteins. This chain is Interactor of constitutive active ROPs 2, chloroplastic (ICR2), found in Arabidopsis thaliana (Mouse-ear cress).